A 189-amino-acid chain; its full sequence is Elongation factor P (189 aa).

It belongs to the elongation factor P family.

It is found in the cytoplasm. Its pathway is protein biosynthesis; polypeptide chain elongation. Functionally, involved in peptide bond synthesis. Stimulates efficient translation and peptide-bond synthesis on native or reconstituted 70S ribosomes in vitro. Probably functions indirectly by altering the affinity of the ribosome for aminoacyl-tRNA, thus increasing their reactivity as acceptors for peptidyl transferase. In Rhizobium rhizogenes (strain K84 / ATCC BAA-868) (Agrobacterium radiobacter), this protein is Elongation factor P.